The following is a 592-amino-acid chain: Potassium-transporting ATPase potassium-binding subunit (592 aa).

A run of 13 helical transmembrane segments spans residues 6-26 (WLET…FGTY), 67-87 (ACAM…MLLL), 136-156 (GFAV…IAAI), 179-199 (LYIL…QGVI), 283-303 (LSNI…TYTF), 312-332 (QGWA…GVFY), 359-379 (FGLA…CGAV), 389-409 (IGGM…GGVG), 411-431 (GLYT…LMIG), 450-470 (ITTV…AMIL), 489-511 (LYAF…GNTL), 519-539 (VAML…AGGL), and 559-579 (FALW…FPAL).

The protein belongs to the KdpA family. As to quaternary structure, the system is composed of three essential subunits: KdpA, KdpB and KdpC.

It localises to the cell inner membrane. Functionally, part of the high-affinity ATP-driven potassium transport (or Kdp) system, which catalyzes the hydrolysis of ATP coupled with the electrogenic transport of potassium into the cytoplasm. This subunit binds the periplasmic potassium ions and delivers the ions to the membrane domain of KdpB through an intramembrane tunnel. The polypeptide is Potassium-transporting ATPase potassium-binding subunit (Geotalea uraniireducens (strain Rf4) (Geobacter uraniireducens)).